Here is a 178-residue protein sequence, read N- to C-terminus: Large ribosomal subunit protein uL6 (178 aa).

Belongs to the universal ribosomal protein uL6 family. Part of the 50S ribosomal subunit.

In terms of biological role, this protein binds to the 23S rRNA, and is important in its secondary structure. It is located near the subunit interface in the base of the L7/L12 stalk, and near the tRNA binding site of the peptidyltransferase center. The polypeptide is Large ribosomal subunit protein uL6 (Streptococcus agalactiae serotype Ia (strain ATCC 27591 / A909 / CDC SS700)).